Here is a 1093-residue protein sequence, read N- to C-terminus: Isomaltosyltransferase (1093 aa).

Positions 1-29 (MYVRNLTGSFRFSLSFLLCFCLFVPSIYA) are cleaved as a signal peptide. Asp566 (nucleophile) is an active-site residue. Glu569 is an active-site residue. The active-site Proton donor is the Asp631. In terms of domain architecture, CBM6 spans 968-1091 (VEYEAEFGVQ…GINFDNIAIV (124 aa)).

It belongs to the glycosyl hydrolase 31 family.

Its subcellular location is the secreted. It catalyses the reaction 2 alpha-isomaltosyl-(1-&gt;4)-D-maltotriose = alpha-isomaltosyl-(1-&gt;3)-alpha-isomaltosyl-(1-&gt;4)-D-maltotriose + D-maltotriose. The catalysed reaction is alpha-isomaltosyl-(1-&gt;3)-alpha-isomaltosyl-(1-&gt;4)-D-maltotriose = cyclobis-(1-&gt;3)-alpha-D-isomaltosyl + D-maltotriose. With respect to regulation, strongly inhibited by Hg(2+) and moderately inhibited by Cu(2+) and Pb(2+). Other metal ions, Tris and EDTA have almost no effects. Glycosyltransferase involved, together with CtsZ, in the conversion of alpha-1,4-glucan into a cyclic tetrasaccharide (CTS) constructed from four alpha-glucopyranosyl residues. Catalyzes the alpha-(1-&gt;3) transfer of the isomaltosyl moiety of alpha-isomaltosyl-(1-&gt;4)-D-maltotriose to another alpha-isomaltosyl-(1-&gt;4)-D-maltotriose, resulting in alpha-isomaltosyl-(1-&gt;3)-alpha-isomaltosyl-alpha-(1-&gt;4)-maltotriose formation. In addition, the enzyme catalyzes the intramolecular cyclization of the product, generating the cyclic tetrasaccharide cyclobis-(1-&gt;6)-alpha-nigerosyl. In Sporosarcina globispora (Bacillus globisporus), this protein is Isomaltosyltransferase.